A 120-amino-acid polypeptide reads, in one-letter code: Protein VraC (120 aa).

The protein is Protein VraC of Staphylococcus epidermidis (strain ATCC 35984 / DSM 28319 / BCRC 17069 / CCUG 31568 / BM 3577 / RP62A).